A 210-amino-acid polypeptide reads, in one-letter code: Prohead protease (210 aa).

A propeptide spanning residues 1–23 (MTQAAIDYNKLKSAPVHLDAYIK) is cleaved from the precursor. Active-site residues include His-76, Ser-122, and Glu-148. The propeptide occupies 167-210 (SMNGHDYTEWRKSFTAISSKAVPAQERNLSELEKLAIALGYVKE).

This sequence belongs to the HK97 prohead protease protein family. Post-translationally, cleaves itself autocatalytically to yield the mature form of the protease.

It localises to the virion. Functionally, serine protease involved in capsid assembly and maturation. Cleaves the major capsid protein, the decoration protein, the portal protein to yield mature procapsids competent for DNA packaging. Acts as a trigger for assembly of the capsid protein. The sequence is that of Prohead protease from Escherichia coli (Enterobacteria phage T5).